A 108-amino-acid chain; its full sequence is Thiosulfate sulfurtransferase GlpE (108 aa).

The 89-residue stretch at 17-105 (QEKEAVLVDI…WQRQFPAEVA (89 aa)) folds into the Rhodanese domain. Cys65 functions as the Cysteine persulfide intermediate in the catalytic mechanism.

The protein belongs to the GlpE family.

It localises to the cytoplasm. The catalysed reaction is thiosulfate + hydrogen cyanide = thiocyanate + sulfite + 2 H(+). The enzyme catalyses thiosulfate + [thioredoxin]-dithiol = [thioredoxin]-disulfide + hydrogen sulfide + sulfite + 2 H(+). Functionally, transferase that catalyzes the transfer of sulfur from thiosulfate to thiophilic acceptors such as cyanide or dithiols. May function in a CysM-independent thiosulfate assimilation pathway by catalyzing the conversion of thiosulfate to sulfite, which can then be used for L-cysteine biosynthesis. The protein is Thiosulfate sulfurtransferase GlpE of Escherichia coli O8 (strain IAI1).